The primary structure comprises 727 residues: Protein edg-1 (727 aa).

Positions 703 to 727 (FAESSVKPTTSSAYGNSSNFSRYAD) are disordered.

As to quaternary structure, may interact with deps-1 and prg-1.

Its subcellular location is the cytoplasmic granule. Functionally, plays a role in regulating deps-1 cluster formation in the germline. In Caenorhabditis elegans, this protein is Protein edg-1.